A 393-amino-acid polypeptide reads, in one-letter code: METFLFTSESVNEGHPDKLCDQVSDAVLDACLAQDPESKVACETCTKTNMVMVFGEITTKAEVDYEKIVRDTCRSIGFTSDDVGLDADKCKVLVNIEQQSPDIAQGVHGHLTKRPEEIGAGDQGHMFGYATDETPELMPLSHVLATKLGARLTEVRKNGACAWLRPDGKTQVTVEYYNDNGAMVPVRVHTVLISTQHDETVSNDEIAADLKEHVIKPVIPEKYLDEKTIFHLNPSGRFVIGGPHGDAGLTGRKIIIDTYGGWGAHGGGAFSGKDPTKVDRSGAYIVRQAAKSIVANGLARRAIVQVSYAIGVPEPLSVFVDTYGTGKIPDKEILKIVKETFDFRPGMMSINLDLKRGGNGRFQKTAAYGHFGRDDPDFTWEVVKPLKWEKIPA.

A Mg(2+)-binding site is contributed by E9. H15 is an ATP binding site. E43 contacts K(+). Residues E56 and Q99 each contribute to the L-methionine site. ATP is bound by residues 167–169 (DGK), 235–238 (SGRF), D246, 252–253 (RK), A269, K273, and K277. An L-methionine-binding site is contributed by D246. K277 serves as a coordination point for L-methionine.

The protein belongs to the AdoMet synthase family. As to quaternary structure, homotetramer. It depends on Mn(2+) as a cofactor. Mg(2+) serves as cofactor. Requires Co(2+) as cofactor. K(+) is required as a cofactor.

Its subcellular location is the cytoplasm. It carries out the reaction L-methionine + ATP + H2O = S-adenosyl-L-methionine + phosphate + diphosphate. It functions in the pathway amino-acid biosynthesis; S-adenosyl-L-methionine biosynthesis; S-adenosyl-L-methionine from L-methionine: step 1/1. Catalyzes the formation of S-adenosylmethionine from methionine and ATP. The reaction comprises two steps that are both catalyzed by the same enzyme: formation of S-adenosylmethionine (AdoMet) and triphosphate, and subsequent hydrolysis of the triphosphate. May be involved in the synthesis of betain in response to abiotic stress such as high salinity. The polypeptide is S-adenosylmethionine synthase 2 (SAMS2) (Beta vulgaris (Sugar beet)).